Here is a 200-residue protein sequence, read N- to C-terminus: Recombination protein RecR (200 aa).

The C4-type zinc finger occupies 59 to 74 (CEKCNTFTEAQICEVC). The Toprim domain occupies 82–177 (ALLCVVETPA…AVTRLARGVP (96 aa)).

This sequence belongs to the RecR family.

May play a role in DNA repair. It seems to be involved in an RecBC-independent recombinational process of DNA repair. It may act with RecF and RecO. This chain is Recombination protein RecR, found in Burkholderia mallei (strain NCTC 10247).